Consider the following 412-residue polypeptide: MILTSVLGSGPRSGSSLWPLLGSSLSLRVRSTSATDTHHVELARERSKTVTSFYNQSAIDVVAEKPSVRLTPTMMLYSGRSQDGSHLLKSGRYLQQELPVRIAHRIKGFRSLPFIIGCNPTILHVHELYIRAFQKLTDFPPIKDQADEAQYCQLVRQLLDDHKDVVTLLAEGLRESRKHIEDEKLVRYFLDKTLTSRLGIRMLATHHLALHEDKPDFVGIICTRLSPKKIIEKWVDFARRLCEHKYGNAPRVRINGHVAARFPFIPMPLDYILPELLKNAMRATMESHLDTPYNVPDVVITIANNDVDLIIRISDRGGGIAHKDLDRVMDYHFTTAEASTQDPRISPLFGHLDMHSGGQSGPMHGFGFGLPTSRAYAEYLGGSLQLQSLQGIGTDVYLRLRHIDGREESFRI.

A mitochondrion-targeting transit peptide spans 1-30; it reads MILTSVLGSGPRSGSSLWPLLGSSLSLRVR. Position 31 is a phosphoserine (serine 31). Positions 159-404 constitute a Histidine kinase domain; that stretch reads LDDHKDVVTL…DVYLRLRHID (246 aa). N6-acetyllysine is present on residues lysine 192 and lysine 233. 2 residues coordinate ATP: asparagine 279 and aspartate 315. Position 279 (asparagine 279) interacts with Mg(2+). K(+) contacts are provided by valine 328, aspartate 330, and phenylalanine 333. The ATP site is built by threonine 334 and threonine 335. A phosphoserine mark is found at serine 356 and serine 360. ATP is bound by residues histidine 364, glycine 367, and leucine 370. Residue glycine 367 participates in K(+) binding.

This sequence belongs to the PDK/BCKDK protein kinase family. Homodimer. Homotetramer. Dimerizes through interaction of two opposing nucleotide-binding domains. Interacts with E2 component of the branched-chain alpha-ketoacid dehydrogenase (BCKDH) complex. Competes with BCKDK for binding to the E2 component; this interaction is modulated by branched-chain alpha-keto acids. At steady state, BCKDH holoenzyme contains BCKDK and BCKDHA is phosphorylated. In response to high levels of branched-chain alpha-keto acids, the inhibitory BCKDK is replaced by activating PPM1K leading to BCKDHA dephosphorylation and BCAA degradation. Post-translationally, autophosphorylated. In terms of tissue distribution, expressed in heart and liver.

The protein localises to the mitochondrion matrix. The protein resides in the mitochondrion. The enzyme catalyses L-seryl-[3-methyl-2-oxobutanoate dehydrogenase] + ATP = O-phospho-L-seryl-[3-methyl-2-oxobutanoate dehydrogenase] + ADP + H(+). The catalysed reaction is L-seryl-[protein] + ATP = O-phospho-L-seryl-[protein] + ADP + H(+). The ATP-ase activity is up-regulated by potassium and rubidium ions but not by sodium ions. Up-regulated in the presence of apo- or lipoylated-DBT/E2b subunit of the BCKDH complex. In terms of biological role, serine/threonine-protein kinase component of macronutrients metabolism. Forms a functional kinase and phosphatase pair with PPM1K, serving as a metabolic regulatory node that coordinates branched-chain amino acids (BCAAs) with glucose and lipid metabolism via two distinct phosphoprotein targets: mitochondrial BCKDHA subunit of the branched-chain alpha-ketoacid dehydrogenase (BCKDH) complex and cytosolic ACLY, a lipogenic enzyme of Krebs cycle. Phosphorylates and inactivates mitochondrial BCKDH complex a multisubunit complex consisting of three multimeric components each involved in different steps of BCAA catabolism: E1 composed of BCKDHA and BCKDHB, E2 core composed of DBT monomers, and E3 composed of DLD monomers. Associates with the E2 component of BCKDH complex and phosphorylates BCKDHA on Ser-333, leading to conformational changes that interrupt substrate channeling between E1 and E2 and inactivates the BCKDH complex. phosphorylates ACLY on Ser-455 in response to changes in cellular carbohydrate abundance such as occurs during fasting to feeding metabolic transition. Refeeding stimulates MLXIPL/ChREBP transcription factor, leading to increased BCKDK to PPM1K expression ratio, phosphorylation and activation of ACLY that ultimately results in the generation of malonyl-CoA and oxaloacetate immediate substrates of de novo lipogenesis and glucogenesis, respectively. Recognizes phosphosites having SxxE/D canonical motif. The polypeptide is Branched-chain alpha-ketoacid dehydrogenase kinase (Bckdk) (Rattus norvegicus (Rat)).